Reading from the N-terminus, the 839-residue chain is MPRLDVEKTIEELSLGEKVALTAGIDFWHTASVPRLNIPTLRMSDGPNGVRGTRFFNGVPAACFPCATALGATWDTELLHEIGQLMGEESIAKGSHIILGPTINTQRSPLGGRGFESFAEDGVLSGLLAGYISKGIQEKGVAATLKHFVCNDQEHQRMAVDSIVTQRALREIYLLPFQLAMRICRTACVMTAYNKVNGTHVSQNKEIITDILRKEWGWDGLVMSDWFGTYSTSDAINAGLDLEMPGKTRWRGTALAHAVSSNEVAEFVMDERVRNVLNLVNFVDGLNIPENAPEKALNRPQDQALLRRAAAESVVLMKNEEDILPLKKEKSILVIGPNSKVAAYCGGGSASLDAYYTVNPFEGVSAQSKGEVKFSQGVYSHKDLPLLGPLLKTADGKTGFSFKVYNEHPSESNRELIEQLHLVSSSGFLMDYVNPKIKSLTYYVDMEGLFTPEEDGVYDFGVTVVGTGQLFIDGELVVDNTKNQRQGSAFFGSATVEEKGSKELKAGQTYKVLFQFGTAPTSDLDTRGVVVFGPGGFRFGASRRVGQEELISNAVKLASEAEQVVVFAGLTSEWETEGYDRDHMDLPPGSDEMISRVLDVNPNAVVVIQSGTPVTMPWANKTKALLHAWFGGNECGNGIADVLYGDVNPSGKLPITFPVRLQDNPSYVNFRSERGRVLYGEDVYVGYRYYEKVDLAPLFPFGHGLSYTTFTRSDLTLTTTPEKPQYEESGEPITATVTVTNTGKVAGAEIVQLWVAPPATEVNRPVRELKGFTKVFLQPGEQKKVEIVVEKKLATSWFDEMREKWASEKGEYGVLVTGTGEGVLKSSFKVEKTRYWLGL.

N-linked (GlcNAc...) asparagine glycosylation is present at asparagine 197. Aspartate 225 is a catalytic residue. Residues 395–555 (DGKTGFSFKV…GQEELISNAV (161 aa)) enclose the PA14 domain. An N-linked (GlcNAc...) asparagine glycan is attached at asparagine 620.

The protein belongs to the glycosyl hydrolase 3 family.

It is found in the secreted. It carries out the reaction Hydrolysis of terminal, non-reducing beta-D-glucosyl residues with release of beta-D-glucose.. The protein operates within glycan metabolism; cellulose degradation. Beta-glucosidases are one of a number of cellulolytic enzymes involved in the degradation of cellulosic biomass. Catalyzes the last step releasing glucose from the inhibitory cellobiose. In Aspergillus flavus (strain ATCC 200026 / FGSC A1120 / IAM 13836 / NRRL 3357 / JCM 12722 / SRRC 167), this protein is Probable beta-glucosidase I (bglI).